The sequence spans 420 residues: Phosphatidylinositol 5-phosphate 4-kinase type-2 gamma (420 aa).

An N-acetylalanine modification is found at alanine 2. Serine 26 is subject to Phosphoserine. Residues 43–419 (AADPLVGVFL…RFLDFISNIF (377 aa)) form the PIPK domain. A required for interaction with PIP5K1A region spans residues 69–75 (VMLLPDD). Serine 349 bears the Phosphoserine mark.

Interacts with PIP5K1A; the interaction inhibits PIP5K1A kinase activity. Post-translationally, phosphorylated, phosphorylation is induced by EGF. As to expression, widely expressed, with the most abundant expression in kidney.

It is found in the endoplasmic reticulum. It localises to the cytoplasm. It carries out the reaction a 1,2-diacyl-sn-glycero-3-phospho-(1D-myo-inositol-5-phosphate) + ATP = a 1,2-diacyl-sn-glycero-3-phospho-(1D-myo-inositol-4,5-bisphosphate) + ADP + H(+). The enzyme catalyses 1,2-dihexadecanoyl-sn-glycero-3-phospho-(1D-myo-inositol-5-phosphate) + ATP = 1,2-dihexadecanoyl-sn-glycero-3-phospho-(1D-myo-inositol-4,5-bisphosphate) + ADP + H(+). It catalyses the reaction 1,2-dihexadecanoyl-sn-glycero-3-phospho-(1D-myo-inositol-5-phosphate) + GTP = 1,2-dihexadecanoyl-sn-glycero-3-phospho-(1D-myo-inositol-4,5-bisphosphate) + GDP + H(+). In terms of biological role, phosphatidylinositol 5-phosphate 4-kinase with low enzymatic activity. May be a GTP sensor, has higher GTP-dependent kinase activity than ATP-dependent kinase activity. PIP4Ks negatively regulate insulin signaling through a catalytic-independent mechanism. They interact with PIP5Ks and suppress PIP5K-mediated PtdIns(4,5)P2 synthesis and insulin-dependent conversion to PtdIns(3,4,5)P3. The chain is Phosphatidylinositol 5-phosphate 4-kinase type-2 gamma from Rattus norvegicus (Rat).